The following is a 331-amino-acid chain: Probable deacetylase MTH_1194 (331 aa).

His-118 acts as the Proton donor/acceptor in catalysis. Asp-155, His-157, and Asp-244 together coordinate Zn(2+).

The protein belongs to the histone deacetylase family. The cofactor is Zn(2+).

Functionally, probable deacetylase. This is Probable deacetylase MTH_1194 from Methanothermobacter thermautotrophicus (strain ATCC 29096 / DSM 1053 / JCM 10044 / NBRC 100330 / Delta H) (Methanobacterium thermoautotrophicum).